Reading from the N-terminus, the 332-residue chain is GTP 3',8-cyclase (332 aa).

The Radical SAM core domain maps to 9–220 (RFARKVDYLR…DQVRERIAER (212 aa)). Position 18 (Arg18) interacts with GTP. The [4Fe-4S] cluster site is built by Cys25 and Cys29. Residue Tyr31 participates in S-adenosyl-L-methionine binding. Cys32 is a [4Fe-4S] cluster binding site. GTP is bound at residue Arg67. Residue Gly71 coordinates S-adenosyl-L-methionine. Thr98 contributes to the GTP binding site. Ser122 serves as a coordination point for S-adenosyl-L-methionine. Lys159 lines the GTP pocket. Met193 provides a ligand contact to S-adenosyl-L-methionine. 2 residues coordinate [4Fe-4S] cluster: Cys258 and Cys261. 263–265 (RVR) is a binding site for GTP. A [4Fe-4S] cluster-binding site is contributed by Cys275.

It belongs to the radical SAM superfamily. MoaA family. As to quaternary structure, monomer and homodimer. [4Fe-4S] cluster serves as cofactor.

It catalyses the reaction GTP + AH2 + S-adenosyl-L-methionine = (8S)-3',8-cyclo-7,8-dihydroguanosine 5'-triphosphate + 5'-deoxyadenosine + L-methionine + A + H(+). It participates in cofactor biosynthesis; molybdopterin biosynthesis. In terms of biological role, catalyzes the cyclization of GTP to (8S)-3',8-cyclo-7,8-dihydroguanosine 5'-triphosphate. This is GTP 3',8-cyclase from Pseudomonas savastanoi pv. phaseolicola (strain 1448A / Race 6) (Pseudomonas syringae pv. phaseolicola (strain 1448A / Race 6)).